An 83-amino-acid chain; its full sequence is Small ribosomal subunit protein eS21 (83 aa).

This sequence belongs to the eukaryotic ribosomal protein eS21 family. Component of the 40S small ribosomal subunit.

It localises to the cytoplasm. It is found in the cytosol. The protein resides in the rough endoplasmic reticulum. The chain is Small ribosomal subunit protein eS21 (RpS21) from Spodoptera frugiperda (Fall armyworm).